Here is a 159-residue protein sequence, read N- to C-terminus: Ribosome maturation factor RimP (159 aa).

The protein belongs to the RimP family.

It localises to the cytoplasm. Required for maturation of 30S ribosomal subunits. The protein is Ribosome maturation factor RimP of Bordetella avium (strain 197N).